The sequence spans 293 residues: MKASSKAIKLVLDHLKSTGRVLGSVESGNSATISEKTASVNKQQQLQEKKPSVLQYRSYNPYLVKEDFLSILPENLYKKRGQFTNELDFQLMKVRDPKYFQFKDQYYLFFNDYNSLTEYIKLTKHSRINKIRVKMTPLAQPLPTLLTKLQRYSKNLYNAFRSSEQYFEGLNEKVDVSGEFTTNQLRSILDSVEEIENKSVLVWNIPTKLRSHDILNYFWFYNIRSSFKIYWDDEMKRNLRFISFENSHDAYRFKRNYHGLLAKELLTLSEKGDAADYSLEMDDSKILIEHLSE.

It is found in the mitochondrion inner membrane. Activator of specific mitochondrial mRNAs. PET54 is involved in the excision of intron aI5-beta from pre-mRNA for cytochrome c oxidase I (COX1) and plays a role in promoting the translation of COX3. The polypeptide is Protein PET54 (PET54) (Saccharomyces cerevisiae (strain ATCC 204508 / S288c) (Baker's yeast)).